Reading from the N-terminus, the 186-residue chain is Translation initiation factor IF-3 (186 aa).

This sequence belongs to the IF-3 family. In terms of assembly, monomer.

It is found in the cytoplasm. Its function is as follows. IF-3 binds to the 30S ribosomal subunit and shifts the equilibrium between 70S ribosomes and their 50S and 30S subunits in favor of the free subunits, thus enhancing the availability of 30S subunits on which protein synthesis initiation begins. The polypeptide is Translation initiation factor IF-3 (Chlamydia muridarum (strain MoPn / Nigg)).